The following is a 310-amino-acid chain: Olfactory receptor 4C16 (310 aa).

Residues 1–23 (MQLNNNVTEFILLGLTQDPFWKK) are Extracellular-facing. A glycan (N-linked (GlcNAc...) asparagine) is linked at asparagine 6. Residues 24 to 47 (IVFVIFLRLYLGTLLGNLLIIISV) form a helical membrane-spanning segment. At 48–55 (KTSQALKN) the chain is on the cytoplasmic side. Residues 56–77 (PMFFFLFYLSLSDTCLSTSITP) traverse the membrane as a helical segment. At 78-98 (RMIVDALLKKTTISFSECMIQ) the chain is on the extracellular side. A disulfide bond links cysteine 95 and cysteine 187. A helical transmembrane segment spans residues 99–118 (VFSSHVFGCLEIFILILTAV). At 119-137 (DRYVDICKPLHYMTIISQW) the chain is on the cytoplasmic side. A helical transmembrane segment spans residues 138 to 156 (VCGVLMAVAWVGSCVHSLV). The Extracellular portion of the chain corresponds to 157 to 193 (QIFLALSLPFCGPNVINHCFCDLQPLLKQACSETYVV). Residues 194 to 217 (NLLLVSNSGAICAVSYVMLIFSYV) traverse the membrane as a helical segment. The Cytoplasmic portion of the chain corresponds to 218 to 233 (IFLHSLRNHSAEVIKK). The chain crosses the membrane as a helical span at residues 234–256 (ALSTCVSHIIVVILFFGPCIFMY). Over 257-267 (TCLATVFPMDK) the chain is Extracellular. A helical transmembrane segment spans residues 268 to 287 (MIAVFYTVGTSFLNPVIYTL). Over 288–310 (KNTEVKSAMRKLWSKKLITDDKR) the chain is Cytoplasmic.

This sequence belongs to the G-protein coupled receptor 1 family.

The protein resides in the cell membrane. Functionally, odorant receptor. This chain is Olfactory receptor 4C16 (OR4C16), found in Homo sapiens (Human).